The chain runs to 284 residues: Nitrogenase iron protein 1 (284 aa).

17–24 (GKGGIGKS) contributes to the ATP binding site. Cys105 contributes to the [4Fe-4S] cluster binding site. The residue at position 108 (Arg108) is an ADP-ribosylarginine; by dinitrogenase reductase ADP-ribosyltransferase. Cys140 contributes to the [4Fe-4S] cluster binding site.

Belongs to the NifH/BchL/ChlL family. Homodimer. The cofactor is [4Fe-4S] cluster. Post-translationally, the reversible ADP-ribosylation of Arg-108 inactivates the nitrogenase reductase and regulates nitrogenase activity.

The catalysed reaction is N2 + 8 reduced [2Fe-2S]-[ferredoxin] + 16 ATP + 16 H2O = H2 + 8 oxidized [2Fe-2S]-[ferredoxin] + 2 NH4(+) + 16 ADP + 16 phosphate + 6 H(+). Functionally, the key enzymatic reactions in nitrogen fixation are catalyzed by the nitrogenase complex, which has 2 components: the iron protein and the molybdenum-iron protein. The protein is Nitrogenase iron protein 1 (nifH1) of Methanothermococcus thermolithotrophicus (Methanococcus thermolithotrophicus).